Consider the following 218-residue polypeptide: 7-cyano-7-deazaguanine synthase (218 aa).

Position 9–19 (9–19 (YSGGMDSFTVL)) interacts with ATP. Positions 185, 193, 196, and 199 each coordinate Zn(2+).

It belongs to the QueC family. It depends on Zn(2+) as a cofactor.

It carries out the reaction 7-carboxy-7-deazaguanine + NH4(+) + ATP = 7-cyano-7-deazaguanine + ADP + phosphate + H2O + H(+). Its pathway is purine metabolism; 7-cyano-7-deazaguanine biosynthesis. Functionally, catalyzes the ATP-dependent conversion of 7-carboxy-7-deazaguanine (CDG) to 7-cyano-7-deazaguanine (preQ(0)). This chain is 7-cyano-7-deazaguanine synthase, found in Pseudoalteromonas translucida (strain TAC 125).